Reading from the N-terminus, the 115-residue chain is Large ribosomal subunit protein bL19 (115 aa).

It belongs to the bacterial ribosomal protein bL19 family.

Functionally, this protein is located at the 30S-50S ribosomal subunit interface and may play a role in the structure and function of the aminoacyl-tRNA binding site. The sequence is that of Large ribosomal subunit protein bL19 from Edwardsiella ictaluri (strain 93-146).